The chain runs to 223 residues: ATP phosphoribosyltransferase (223 aa).

The protein belongs to the ATP phosphoribosyltransferase family. Short subfamily. In terms of assembly, heteromultimer composed of HisG and HisZ subunits.

Its subcellular location is the cytoplasm. The catalysed reaction is 1-(5-phospho-beta-D-ribosyl)-ATP + diphosphate = 5-phospho-alpha-D-ribose 1-diphosphate + ATP. The protein operates within amino-acid biosynthesis; L-histidine biosynthesis; L-histidine from 5-phospho-alpha-D-ribose 1-diphosphate: step 1/9. Functionally, catalyzes the condensation of ATP and 5-phosphoribose 1-diphosphate to form N'-(5'-phosphoribosyl)-ATP (PR-ATP). Has a crucial role in the pathway because the rate of histidine biosynthesis seems to be controlled primarily by regulation of HisG enzymatic activity. This Sphingopyxis alaskensis (strain DSM 13593 / LMG 18877 / RB2256) (Sphingomonas alaskensis) protein is ATP phosphoribosyltransferase.